Reading from the N-terminus, the 298-residue chain is MSGNNHPGDASAEIDVVLVTGLSGAGRGTAAKVLEDLGWYVADNLPPQLITWMVDFGLAAGSRITQLAVVMDVRSRGFTGDLDSVRRELATRNIIPRVVFMEASDDMLVRRYEQNRRSHPLQGEQTLAEGIAAERRMLAPVRATADLIIDTSALSVPGLRESIERAFGGDASATTSVTVESFGFKYGLPMDADIVMDVRFLPNPHWVDELRSLTGQHSAVRDYVLGQPGAAEFLRTYRRLLSLVVDGYRREGKRYMTVAIGCTGGKHRSVAIAEALMGLLQSDLQLSVRVLHRDLGRE.

Residue 21–28 (GLSGAGRG) coordinates ATP. A GTP-binding site is contributed by 72 to 75 (DVRS).

Belongs to the RapZ-like family.

Its function is as follows. Displays ATPase and GTPase activities. The chain is Nucleotide-binding protein MLBr00563 from Mycobacterium leprae (strain Br4923).